The following is a 379-amino-acid chain: Quinolinate synthase (379 aa).

Iminosuccinate contacts are provided by His-60 and Ser-81. Cys-126 contacts [4Fe-4S] cluster. Iminosuccinate is bound by residues 152–154 (YAN) and Ser-169. Residue Cys-213 participates in [4Fe-4S] cluster binding. Iminosuccinate is bound by residues 239-241 (HPE) and Thr-256. Residue Cys-310 coordinates [4Fe-4S] cluster.

The protein belongs to the quinolinate synthase family. Type 1 subfamily. It depends on [4Fe-4S] cluster as a cofactor.

Its subcellular location is the cytoplasm. It carries out the reaction iminosuccinate + dihydroxyacetone phosphate = quinolinate + phosphate + 2 H2O + H(+). It functions in the pathway cofactor biosynthesis; NAD(+) biosynthesis; quinolinate from iminoaspartate: step 1/1. Catalyzes the condensation of iminoaspartate with dihydroxyacetone phosphate to form quinolinate. The polypeptide is Quinolinate synthase (Herminiimonas arsenicoxydans).